Reading from the N-terminus, the 279-residue chain is Undecaprenyl-diphosphatase (279 aa).

The next 8 helical transmembrane spans lie at 1-21, 39-59, 96-116, 128-148, 155-175, 201-221, 231-251, and 259-279; these read MVLE…LPIS, GRFF…LYFF, LLLV…VRFV, FTMG…DALF, IFQI…FAII, FSFL…LVAG, YSLI…SALL, and FVLF…VSFF.

Belongs to the UppP family.

The protein resides in the cell membrane. It carries out the reaction di-trans,octa-cis-undecaprenyl diphosphate + H2O = di-trans,octa-cis-undecaprenyl phosphate + phosphate + H(+). Its function is as follows. Catalyzes the dephosphorylation of undecaprenyl diphosphate (UPP). Confers resistance to bacitracin. This is Undecaprenyl-diphosphatase from Tropheryma whipplei (strain Twist) (Whipple's bacillus).